Consider the following 134-residue polypeptide: Interleukin-5 (134 aa).

The signal sequence occupies residues methionine 1–alanine 19. A glycan (O-linked (GalNAc...) threonine) is linked at threonine 22. Residues asparagine 47 and asparagine 90 are each glycosylated (N-linked (GlcNAc...) asparagine).

This sequence belongs to the IL-5 family. As to quaternary structure, homodimer; disulfide-linked. Interacts with IL5RA. Interacts with CSF2RB.

The protein localises to the secreted. Homodimeric cytokine expressed predominantly by T-lymphocytes and NK cells that plays an important role in the survival, differentiation, and chemotaxis of eosinophils. Also acts on activated and resting B-cells to induce immunoglobulin production, growth, and differentiation. Mechanistically, exerts its biological effects through a receptor composed of IL5RA subunit and the cytokine receptor common subunit beta/CSF2RB. Binding to the receptor leads to activation of various kinases including LYN, SYK and JAK2 and thereby propagates signals through the RAS-MAPK and JAK-STAT5 pathways respectively. The chain is Interleukin-5 (IL5) from Macaca mulatta (Rhesus macaque).